The sequence spans 202 residues: 3-isopropylmalate dehydratase small subunit (202 aa).

This sequence belongs to the LeuD family. LeuD type 1 subfamily. In terms of assembly, heterodimer of LeuC and LeuD.

It catalyses the reaction (2R,3S)-3-isopropylmalate = (2S)-2-isopropylmalate. Its pathway is amino-acid biosynthesis; L-leucine biosynthesis; L-leucine from 3-methyl-2-oxobutanoate: step 2/4. Catalyzes the isomerization between 2-isopropylmalate and 3-isopropylmalate, via the formation of 2-isopropylmaleate. This chain is 3-isopropylmalate dehydratase small subunit, found in Paenarthrobacter aurescens (strain TC1).